The following is a 221-amino-acid chain: Lipoprotein-releasing system ATP-binding protein LolD (221 aa).

An ABC transporter domain is found at 6-220 (LILKNISKHY…YKLKHRLLNI (215 aa)). 42-49 (GSSGSGKS) is an ATP binding site.

The protein belongs to the ABC transporter superfamily. Lipoprotein translocase (TC 3.A.1.125) family. In terms of assembly, the complex is composed of two ATP-binding proteins (LolD) and two transmembrane proteins (LolC and LolE).

The protein localises to the cell inner membrane. Part of the ABC transporter complex LolCDE involved in the translocation of mature outer membrane-directed lipoproteins, from the inner membrane to the periplasmic chaperone, LolA. Responsible for the formation of the LolA-lipoprotein complex in an ATP-dependent manner. The sequence is that of Lipoprotein-releasing system ATP-binding protein LolD from Rickettsia conorii (strain ATCC VR-613 / Malish 7).